Here is a 253-residue protein sequence, read N- to C-terminus: UPF0280 protein Mbar_A3697 (253 aa).

This sequence belongs to the UPF0280 family.

This Methanosarcina barkeri (strain Fusaro / DSM 804) protein is UPF0280 protein Mbar_A3697.